The following is a 269-amino-acid chain: Protein MGF 110-1L (269 aa).

The N-terminal stretch at 1–26 (MLGLQIFTLLSIPTLLYTYELELLDL) is a signal peptide. The A repeat unit spans residues 1 to 145 (MLGLQIFTLL…YVRKRSLQTV (145 aa)). Residues 27 to 116 (TRTPPEKELE…HEWHEAVIRK (90 aa)) lie on the Extracellular side of the membrane. A glycan (N-linked (GlcNAc...) asparagine; by host) is linked at asparagine 75. Residues 117-137 (WQKLLTYGFYLVGCVLVANYV) traverse the membrane as a helical segment. Residues 138-144 (RKRSLQT) lie on the Cytoplasmic side of the membrane. Residues 145-165 (VMYLLVLLVIFFLLSQLMLYR) traverse the membrane as a helical segment. The stretch at 147–269 (YLLVLLVIFF…DNLMKKQDIM (123 aa)) is one B repeat. At 166–269 (ELEDKKHKIG…DNLMKKQDIM (104 aa)) the chain is on the extracellular side.

Belongs to the asfivirus MGF 110 family.

The protein resides in the host membrane. Functionally, plays a role in virus cell tropism, and may be required for efficient virus replication in macrophages. This is Protein MGF 110-1L from African swine fever virus (isolate Warthog/Namibia/Wart80/1980) (ASFV).